The following is a 143-amino-acid chain: Ribosome-binding factor A (143 aa).

A compositionally biased stretch (basic and acidic residues) spans 119–129; sequence AVGDKPAVPRD. The tract at residues 119–143 is disordered; the sequence is AVGDKPAVPRDDNDDPVSDNPERDA.

It belongs to the RbfA family. As to quaternary structure, monomer. Binds 30S ribosomal subunits, but not 50S ribosomal subunits or 70S ribosomes.

It is found in the cytoplasm. In terms of biological role, one of several proteins that assist in the late maturation steps of the functional core of the 30S ribosomal subunit. Associates with free 30S ribosomal subunits (but not with 30S subunits that are part of 70S ribosomes or polysomes). Required for efficient processing of 16S rRNA. May interact with the 5'-terminal helix region of 16S rRNA. This Marinobacter nauticus (strain ATCC 700491 / DSM 11845 / VT8) (Marinobacter aquaeolei) protein is Ribosome-binding factor A.